A 563-amino-acid chain; its full sequence is Phospholipase B-like protein F (563 aa).

The N-terminal stretch at 1–21 is a signal peptide; the sequence is MKIINSFVFIFVLLFVFNTNA. N-linked (GlcNAc...) asparagine glycosylation is found at N85, N107, N118, N121, N208, N312, and N537.

Belongs to the phospholipase B-like family.

Its subcellular location is the secreted. Its function is as follows. Probable phospholipase. In Dictyostelium discoideum (Social amoeba), this protein is Phospholipase B-like protein F (plbF).